The primary structure comprises 436 residues: MLKVSAVLCVCAAAWCSQSLAAAAAVAAAVGRSDGGNFLDDKQWLTTISQYDKEVGQWNKFRDEVEDDDFRTWSPGKPFDQALDPAKDPCLKMKCSRHKVCIAQDYQTAVCISHRRLTHRMKEAGVDHRQWRGPILSTCKQCPVVYPSPVCGSDGHTYSFQCKLEYQACVLGKQISVKCEGHCPCPSDKPTSTSRNVKRACSDLEFREVANRLRDWFKALHESGSQNKKTKTLLRPERSRFDTSILPICKDSLGWMFNRLDTNYDLLLDQSELRSIYLDKNEQCTKAFFNSCDTYKDSLISNNEWCYCFQRQQDPPCQTELSNIQKRQGVKKLLGQYIPLCDEDGYYKPTQCHGSVGQCWCVDRYGNEVMGSRINGVADCAIDFEISGDFASGDFHEWTDDEDDEDDIMNDEDEIEDDDEDEGDDDDGGDDHDGYI.

Residues 1–22 (MLKVSAVLCVCAAAWCSQSLAA) form the signal peptide. Disulfide bonds link C90-C101, C95-C111, C139-C169, C142-C162, C151-C183, C317-C341, C352-C359, and C361-C380. The Kazal-like domain maps to 133 to 185 (GPILSTCKQCPVVYPSPVCGSDGHTYSFQCKLEYQACVLGKQISVKCEGHCPC). A Thyroglobulin type-1 domain is found at 314 to 380 (DPPCQTELSN…GSRINGVADC (67 aa)). S387 and S392 each carry an O-linked (Xyl...) (glycosaminoglycan) serine glycan. A disordered region spans residues 393-436 (GDFHEWTDDEDDEDDIMNDEDEIEDDDEDEGDDDDGGDDHDGYI). Over residues 399-430 (TDDEDDEDDIMNDEDEIEDDDEDEGDDDDGGD) the composition is skewed to acidic residues.

In terms of processing, contains chondroitin sulfate and heparan sulfate O-linked oligosaccharides. As to expression, expressed in brain.

It localises to the secreted. The protein resides in the extracellular space. It is found in the extracellular matrix. In terms of biological role, may participate in diverse steps of neurogenesis. Inhibits the processing of pro-matrix metalloproteinase 2 (MMP-2) by MT1-MMP and MT3-MMP. May interfere with tumor invasion. This Pongo abelii (Sumatran orangutan) protein is Testican-3 (SPOCK3).